A 409-amino-acid polypeptide reads, in one-letter code: MTDERGNFYYNTPPPLRYPSNPATAIFTSAQTYNAPGYVPPATVPTTVATRDNRMDYTSRSNSTNSVAIAPYNKSKEPTLDAGESIWYNKCVDFVQKIIRYYRCNDMSELSPLMILFINTIRDMCIDTNPISVNVVKRFESEETMIRHLIRLQKELGQSNAAESLSSDSNIFQPSFVLNSLPAYAQKFYNGGADMLGKDALAEAAKQLSLAVQYMVAEAVTCNIPIPLPFNQQLANNYMTLLLKHATLPPNIQSAVESRRFPHINMINDLINAVIDDLFAGGGDYYHYVLNEKNRARVMSLKENVAFLAPLSASANIFNYMAELATRAGKQPSMFQNATFLTSAANAVNSPAAHLTKSACQESLTELAFQNETLRRFIFQQINYNKDANAIIAAAAPNATRPNTKGRTA.

Threonine 128 is a glycosylation site (O-linked (GlcNAc) threonine; by host). A leucine zipper 1 (LZ1) region spans residues 201 to 214; sequence LAEAAKQLSLAVQY. The segment at 367–380 is leucine zipper 2 (LZ2); it reads LAFQNETLRRFIFQ.

This sequence belongs to the baculoviridae gp41 family. Homooligomer. Homotrimer. Forms oligomers in infected cells, while selectively assembles as trimers into progeny virions. Post-translationally, O-glycosylated; by N-acetylglucosamine at one or more locations.

The protein resides in the virion. Its subcellular location is the host nucleus. Its function is as follows. Major tegument protein that participates in the egress of nucleocapsids from the host nucleus. May be involved in host nucleus-cytoplasm transportation of nucleocapsids to form budded virion (BVs). In Lepidoptera (butterflies and moths), this protein is Structural glycoprotein gp41 (GP41).